The primary structure comprises 638 residues: LIM domain kinase 2 (638 aa).

LIM zinc-binding domains lie at 12-63 (CRGC…CHKD) and 72-124 (CHGC…CGKC). One can recognise a PDZ domain in the interval 152–239 (LISMPATTEC…TLQLLIEHDP (88 aa)). Residue Thr-210 is modified to Phosphothreonine. A disordered region spans residues 255-304 (PHMQSTGHTLMLSTLDTKENQEGTLRRRSLRRSNSISKSPGPSSPKEPLL). Over residues 257–269 (MQSTGHTLMLSTL) the composition is skewed to polar residues. The span at 270–279 (DTKENQEGTL) shows a compositional bias: basic and acidic residues. Positions 286-304 (RSNSISKSPGPSSPKEPLL) are enriched in low complexity. Residues Ser-293 and Ser-298 each carry the phosphoserine modification. Positions 331–608 (LIHGEVLGKG…DSFEALSLFL (278 aa)) constitute a Protein kinase domain. ATP is bound by residues 337–345 (LGKGFFGQA) and Lys-360. Asp-451 is an active-site residue. Residue Thr-505 is modified to Phosphothreonine; by ROCK1 and CDC42BP.

Belongs to the protein kinase superfamily. TKL Ser/Thr protein kinase family. As to quaternary structure, binds ROCK1 and MARF1. Interacts with NISCH. Post-translationally, phosphorylated on serine and/or threonine residues by ROCK1. In terms of tissue distribution, specifically expressed in the testes.

Its subcellular location is the cytoplasm. It localises to the cytoskeleton. It is found in the spindle. The protein resides in the microtubule organizing center. The protein localises to the centrosome. Its subcellular location is the nucleus. It localises to the perinuclear region. The catalysed reaction is L-seryl-[protein] + ATP = O-phospho-L-seryl-[protein] + ADP + H(+). It catalyses the reaction L-threonyl-[protein] + ATP = O-phospho-L-threonyl-[protein] + ADP + H(+). Serine/threonine-protein kinase that plays an essential role in the regulation of actin filament dynamics. Acts downstream of several Rho family GTPase signal transduction pathways. Involved in astral microtubule organization and mitotic spindle orientation during early stages of mitosis by mediating phosphorylation of TPPP. Displays serine/threonine-specific phosphorylation of myelin basic protein and histone (MBP) in vitro. Suppresses ciliogenesis via multiple pathways; phosphorylation of CFL1, suppression of directional trafficking of ciliary vesicles to the ciliary base, and by facilitating YAP1 nuclear localization where it acts as a transcriptional corepressor of the TEAD4 target genes AURKA and PLK1. The polypeptide is LIM domain kinase 2 (Limk2) (Mus musculus (Mouse)).